The sequence spans 202 residues: Protein lin-28 homolog A (202 aa).

A disordered region spans residues 1-31 (MGSVSNQQFAGAKPGEEPSGDSPKAENESQP). A CSD domain is found at 33 to 106 (HGSGICKWFN…GLESIRVTGP (74 aa)). Residues 107-130 (GGVFCIGSERRPKSKSLQKRRSKG) are flexible linker. 2 consecutive CCHC-type zinc fingers follow at residues 131-148 (DRCY…ECKL) and 153-170 (KKCH…NCPA). Residues C133, C136, H141, C146, C155, C158, H163, and C168 each coordinate Zn(2+). The interval 169–202 (PAKAQQSPSSQGKPAYFREKEDMHSSALLPETRE) is disordered.

The protein belongs to the lin-28 family. In terms of assembly, monomer.

It is found in the cytoplasm. Its subcellular location is the rough endoplasmic reticulum. It localises to the P-body. The protein resides in the stress granule. The protein localises to the nucleus. It is found in the nucleolus. Functionally, RNA-binding protein that inhibits processing of pre-let-7 miRNAs and regulates translation of mRNAs that control developmental timing, pluripotency and metabolism. Seems to recognize a common structural G-quartet (G4) feature in its miRNA and mRNA targets. 'Translational enhancer' that drives specific mRNAs to polysomes and increases the efficiency of protein synthesis. Its association with the translational machinery and target mRNAs results in an increased number of initiation events per molecule of mRNA and, indirectly, in mRNA stabilization. Suppressor of microRNA (miRNA) biogenesis, including that of let-7. Binds specific target miRNA precursors (pre-miRNAs), recognizing an 5'-GGAG-3' motif found in their terminal loop, and recruits uridylyltransferase. This results in the terminal uridylation of target pre-miRNAs. Uridylated pre-miRNAs fail to be processed by Dicer and undergo degradation. Localized to the periendoplasmic reticulum area, binds to a large number of spliced mRNAs and inhibits the translation of mRNAs destined for the ER, reducing the synthesis of transmembrane proteins, ER or Golgi lumen proteins, and secretory proteins. Binds to and enhances the translation of mRNAs for several metabolic enzymes, increasing glycolysis and oxidative phosphorylation. Which, with the let-7 repression may enhance tissue repair in adult tissue. The protein is Protein lin-28 homolog A (LIN28A) of Gallus gallus (Chicken).